A 645-amino-acid polypeptide reads, in one-letter code: Rab11 family-interacting protein 1 (645 aa).

Residues Met1–Tyr128 form the C2 domain. Basic and acidic residues predominate over residues Pro171–Ala187. A disordered region spans residues Pro171 to Lys215. Ser186, Ser204, Ser208, and Ser236 each carry phosphoserine. Residues Trp259 to Lys296 form a disordered region. The span at Ser282–Ser293 shows a compositional bias: polar residues. A phosphoserine mark is found at Ser301, Ser316, Ser340, Ser342, Ser344, Ser346, Ser357, Ser358, and Ser383. Residues Pro330–Asn545 are disordered. Composition is skewed to basic and acidic residues over residues Ser378–Met391 and Ala418–Lys432. At Ser434 the chain carries Phosphoserine. A compositionally biased stretch (basic and acidic residues) spans Ser459 to Ala487. The region spanning Lys573–Pro635 is the FIP-RBD domain. Residues Ala581 to Met645 form a necessary for interaction with RAB4A and RAB11A, subcellular location and endosomal recycling region.

In terms of assembly, homooligomer. Interacts with RAB11A, RAB11B, RAB25, RAB4A and RAB14.

Its subcellular location is the recycling endosome. It is found in the cytoplasmic vesicle. Functionally, a Rab11 effector protein involved in the endosomal recycling process. Also involved in controlling membrane trafficking along the phagocytic pathway and in phagocytosis. Interaction with RAB14 may function in the process of neurite formation. The polypeptide is Rab11 family-interacting protein 1 (Rab11fip1) (Mus musculus (Mouse)).